A 237-amino-acid chain; its full sequence is Protein GrpE (237 aa).

Disordered regions lie at residues 24 to 56 (LILE…KQLQ) and 204 to 237 (SAGS…PQPS).

It belongs to the GrpE family. As to quaternary structure, homodimer.

The protein resides in the cytoplasm. Functionally, participates actively in the response to hyperosmotic and heat shock by preventing the aggregation of stress-denatured proteins, in association with DnaK and GrpE. It is the nucleotide exchange factor for DnaK and may function as a thermosensor. Unfolded proteins bind initially to DnaJ; upon interaction with the DnaJ-bound protein, DnaK hydrolyzes its bound ATP, resulting in the formation of a stable complex. GrpE releases ADP from DnaK; ATP binding to DnaK triggers the release of the substrate protein, thus completing the reaction cycle. Several rounds of ATP-dependent interactions between DnaJ, DnaK and GrpE are required for fully efficient folding. In Synechococcus sp. (strain JA-2-3B'a(2-13)) (Cyanobacteria bacterium Yellowstone B-Prime), this protein is Protein GrpE.